The chain runs to 944 residues: 2-oxoglutarate dehydrogenase E1 component (944 aa).

The tract at residues 915 to 944 (RRRSSPAEGDPTVHKKEQERIVSDSLTRKN) is disordered. Residues 925–936 (PTVHKKEQERIV) are compositionally biased toward basic and acidic residues.

This sequence belongs to the alpha-ketoglutarate dehydrogenase family. Homodimer. Part of the 2-oxoglutarate dehydrogenase (OGDH) complex composed of E1 (2-oxoglutarate dehydrogenase), E2 (dihydrolipoamide succinyltransferase) and E3 (dihydrolipoamide dehydrogenase); the complex contains multiple copies of the three enzymatic components (E1, E2 and E3). Thiamine diphosphate is required as a cofactor.

The enzyme catalyses N(6)-[(R)-lipoyl]-L-lysyl-[protein] + 2-oxoglutarate + H(+) = N(6)-[(R)-S(8)-succinyldihydrolipoyl]-L-lysyl-[protein] + CO2. In terms of biological role, E1 component of the 2-oxoglutarate dehydrogenase (OGDH) complex which catalyzes the decarboxylation of 2-oxoglutarate, the first step in the conversion of 2-oxoglutarate to succinyl-CoA and CO(2). The polypeptide is 2-oxoglutarate dehydrogenase E1 component (Bacillus velezensis (strain DSM 23117 / BGSC 10A6 / LMG 26770 / FZB42) (Bacillus amyloliquefaciens subsp. plantarum)).